The chain runs to 706 residues: MASPADSCIQFTRHASDVLLNLNRLRSRDILTDVVIVVSREQFRAHKTVLMACSGLFYSIFTDQLKCNLSVINLDPEINPEGFCILLDFMYTSRLNLREGNIMAVMATAMYLQMEHVVDTCRKFIKASEAEMVSAIKPPREEFLNSRMLMPQDIMAYRGREVVENNLPLRSAPGCESRAFAPSLYSGLSTPPASYSMYSHLPVSSLLFSDEEFRDVRMPVANPFPKERALPCDSARPVPGEYSRPTLEVSPNVCHSNIYSPKETIPEEARSDMHYSVAEGLKPAAPSARNAPYFPCDKASKEEERPSSEDEIALHFEPPNAPLNRKGLVSPQSPQKSDCQPNSPTESCSSKNACILQASGSPPAKSPTDPKACNWKKYKFIVLNSLNQNAKPEGPEQAELGRLSPRAYTAPPACQPPMEPENLDLQSPTKLSASGEDSTIPQASRLNNIVNRSMTGSPRSSSESHSPLYMHPPKCTSCGSQSPQHAEMCLHTAGPTFPEEMGETQSEYSDSSCENGAFFCNECDCRFSEEASLKRHTLQTHSDKPYKCDRCQASFRYKGNLASHKTVHTGEKPYRCNICGAQFNRPANLKTHTRIHSGEKPYKCETCGARFVQVAHLRAHVLIHTGEKPYPCEICGTRFRHLQTLKSHLRIHTGEKPYHCEKCNLHFRHKSQLRLHLRQKHGAITNTKVQYRVSATDLPPELPKAC.

In terms of domain architecture, BTB spans 32–99; the sequence is TDVVIVVSRE…MYTSRLNLRE (68 aa). The segment at 317–349 is disordered; that stretch reads EPPNAPLNRKGLVSPQSPQKSDCQPNSPTESCS. Over residues 330 to 349 the composition is skewed to polar residues; it reads SPQSPQKSDCQPNSPTESCS. Phosphoserine; by MAPK1 occurs at positions 333 and 343. Serine 361 carries the phosphoserine modification. Residues 376 to 379 form a required for interaction with NuRD complex and for transcriptional repressor activity region; sequence KKYK. At lysine 379 the chain carries N6-acetyllysine. Residue serine 404 is modified to Phosphoserine. A disordered region spans residues 407 to 467; the sequence is AYTAPPACQP…PRSSSESHSP (61 aa). Over residues 424 to 456 the composition is skewed to polar residues; it reads DLQSPTKLSASGEDSTIPQASRLNNIVNRSMTG. Over residues 457-466 the composition is skewed to low complexity; it reads SPRSSSESHS. C2H2-type zinc fingers lie at residues 518 to 541, 546 to 568, 574 to 596, 602 to 624, 630 to 652, and 658 to 681; these read FFCN…LQTH, YKCD…KTVH, YRCN…TRIH, YKCE…VLIH, YPCE…LRIH, and YHCE…RQKH.

In terms of assembly, homodimer. Interacts (via BTB domain) with the corepressors BCOR, NCOR1 and SMRT/NCOR2; the interactions are direct. Forms preferably ternary complexes with BCOR and SMRT/NCOR2 on target gene promoters but, on enhancer elements, interacts with SMRT/NCOR2 and HDAC3 to repress proximal gene expression. Interacts with histone deacetylases HDAC2, HDAC5 and HDAC9 (via the catalytic domain). Interacts with ZBTB7 and BCL6B. Interacts with SCF(FBXO11) complex; the interaction is independent of phosphorylation and promotes ubiquitination. Interacts (when phosphorylated) with PIN1; the interaction is required for BCL6 degradation upon genotoxic stress. Interacts with ZBTB17; inhibits ZBTB17 transcriptional activity. Interacts with CTBP1, autoinhibits its transcriptional expression. Interacts with NOTCH1 NCID and SIRT1; leads to a epigenetic repression of selective NOTCH1-target genes. Interacts (nor via BTB domain neither acetylated) with the NuRD complex components CHD4, HDAC1, MBD3 and MTA3; the interaction with MTA3 inhibits BCL6 acetylation and is required for BCL6 transpriptional repression. Phosphorylated by MAPK1 in response to antigen receptor activation at Ser-333 and Ser-343. Phosphorylated by ATM in response to genotoxic stress. Phosphorylation induces its degradation by ubiquitin/proteasome pathway. Post-translationally, polyubiquitinated. Polyubiquitinated by SCF(FBXO11), leading to its degradation by the proteasome. Ubiquitinated by the SCF(FBXL17) complex, leading to its degradation by the proteasome: ubiquitination by the SCF(FBXL17) complex takes place when aberrant BTB domain dimers are formed. In terms of processing, acetylated at Lys-379 by EP300 which inhibits the interaction with NuRD complex and the transcriptional repressor function. Deacetylated by HDAC- and SIR2-dependent pathways. Expressed in germinal center T- and B-cells and in primary immature dendritic cells.

It localises to the nucleus. Its function is as follows. Transcriptional repressor mainly required for germinal center (GC) formation and antibody affinity maturation which has different mechanisms of action specific to the lineage and biological functions. Forms complexes with different corepressors and histone deacetylases to repress the transcriptional expression of different subsets of target genes. Represses its target genes by binding directly to the DNA sequence 5'-TTCCTAGAA-3' (BCL6-binding site) or indirectly by repressing the transcriptional activity of transcription factors. In GC B-cells, represses genes that function in differentiation, inflammation, apoptosis and cell cycle control, also autoregulates its transcriptional expression and up-regulates, indirectly, the expression of some genes important for GC reactions, such as AICDA, through the repression of microRNAs expression, like miR155. An important function is to allow GC B-cells to proliferate very rapidly in response to T-cell dependent antigens and tolerate the physiological DNA breaks required for immunglobulin class switch recombination and somatic hypermutation without inducing a p53/TP53-dependent apoptotic response. In follicular helper CD4(+) T-cells (T(FH) cells), promotes the expression of T(FH)-related genes but inhibits the differentiation of T(H)1, T(H)2 and T(H)17 cells. Also required for the establishment and maintenance of immunological memory for both T- and B-cells. Suppresses macrophage proliferation through competition with STAT5 for STAT-binding motifs binding on certain target genes, such as CCL2 and CCND2. In response to genotoxic stress, controls cell cycle arrest in GC B-cells in both p53/TP53-dependedent and -independent manners. Besides, also controls neurogenesis through the alteration of the composition of NOTCH-dependent transcriptional complexes at selective NOTCH targets, such as HES5, including the recruitment of the deacetylase SIRT1 and resulting in an epigenetic silencing leading to neuronal differentiation. In Homo sapiens (Human), this protein is B-cell lymphoma 6 protein (BCL6).